The primary structure comprises 442 residues: Protein cereblon (442 aa).

Residues 1 to 45 (MAGEGDQQDAAHNMGNHLPLLPAESEEEDEMEVEDQDSKEAKKPN) form a disordered region. The span at 24–35 (ESEEEDEMEVED) shows a compositional bias: acidic residues. Serine 25 is modified (phosphoserine). Residues 81-319 (IPVLPQVMMI…CELDIMNKCT (239 aa)) enclose the Lon N-terminal domain. The CULT domain maps to 318-426 (CTSLCCKQCQ…LTRSALLPTI (109 aa)). Cysteine 323 and cysteine 326 together coordinate Zn(2+). Histidine 378, tryptophan 380, and tryptophan 386 together coordinate (S)-thalidomide. Zn(2+) is bound by residues cysteine 391 and cysteine 394.

Belongs to the CRBN family. As to quaternary structure, interacts with KCNT1. Component of a DCX (DDB1-CUL4-X-box) protein ligase complex, at least composed of CRBN, CUL4A, DDB1 and RBX1. Interacts directly with DDB1. Interacts (in pomalidomide-bound form) with IKZF1 and IKZF3. Interacts with ILF2. Interacts with TRAF6 and ECSIT. Post-translationally, ubiquitinated, ubiquitination is mediated by its own DCX protein ligase complex. As to expression, widely expressed. Highly expressed in brain.

It is found in the cytoplasm. The protein localises to the nucleus. Its subcellular location is the membrane. Its pathway is protein modification; protein ubiquitination. Its function is as follows. Substrate recognition component of a DCX (DDB1-CUL4-X-box) E3 protein ligase complex that mediates the ubiquitination and subsequent proteasomal degradation of target proteins, such as MEIS2, ILF2 or GLUL. Normal degradation of key regulatory proteins is required for normal limb outgrowth and expression of the fibroblast growth factor FGF8. Maintains presynaptic glutamate release and consequently cognitive functions, such as memory and learning, by negatively regulating large-conductance calcium-activated potassium (BK) channels in excitatory neurons. Likely to function by regulating the assembly and neuronal surface expression of BK channels via its interaction with KCNT1. May also be involved in regulating anxiety-like behaviors via a BK channel-independent mechanism. Plays a negative role in TLR4 signaling by interacting with TRAF6 and ECSIT, leading to inhibition of ECSIT ubiquitination, an important step of the signaling. This Homo sapiens (Human) protein is Protein cereblon (CRBN).